Consider the following 714-residue polypeptide: MDGDRTPEEQIEIAESDQGPQLDDNVELANVFSYSLDQRIMEGCVISAILEPRGLETIVAVSVTNKIIIKDKETSLNITETIRCIAAAPFGDGYDCIIIGTDSSVICYDVHNNLTVFRNDVPDGVSCFVYGKLGELDEAIYCGGNCCIWGFDKTGANTYWTVTGDQVTTMCLSDYDNDGETELVIGSPDFEIRVFKNDLMRTELMETDEITCLAHVANGCFAYSLNNGTIGTYVLKERQWRIKSKSNVSKIFNFEEEGLMVVVWKQGKVDLRFAHNGEVLSRDSVSSHVASASVSKKGDESFITVVCLDGKVKGFKIQRAQNGSIDKTQQLIREFGQKKHNLMMELSNYEQEEQLADVEKDRDFRIPVDTEVAVVFVVNTELQLLSLRVEASHNIPIRGVLIFAEGLFEGESYIWIPPNEYQSRSVIDIPLVIDKDSTNDLHTKVFLGQVDSNKLMVMENTRILPKFCRFTLLREEYSKFFYMPTAYIQFDINSRAAKLSEWVQESFTIDASLVEMFDEPEGEFKFMGLRPKHEKSLMFKISHSEKTCKIYHDKIETMGAIVQSYASFYQIQNMESVAHFPDVFKEADEILEEIDPMTEVRDRLTAELQERQAAVKEIIIRAEDSIAIDNIPDARKFYIRLKANDAAARQAAQLRWNNQERCVKSLRRLNKIIENCSRLRVGEPGRQIVVSCRSAIADDNKQIITKILQYGASV.

Coiled-coil stretches lie at residues 332 to 361 and 597 to 627; these read IREF…VEKD and MTEV…DSIA.

In terms of assembly, part of BBSome complex, that contains at least bbs-1, bbs-2, bbs-4, bbs-5, osm-12, bbs-8/ttc-8 and bbs-9. As to expression, expressed in ciliated cells including amphid and both inner and outer labial neurons of the head and in both phasmid neurons PHA and PHB in the tail at larval stages L1 and L2.

It localises to the cell projection. Its subcellular location is the cilium. The protein localises to the cytoplasm. The protein resides in the cytoskeleton. It is found in the cilium basal body. It localises to the cilium axoneme. Functionally, component of the BBSome complex. The BBSome complex is thought to function as a coat complex required for sorting of specific membrane proteins to the primary cilia. The BBSome complex is required for ciliogenesis but is dispensable for centriolar satellite function. Required for proper BBSome complex assembly and its ciliary localization. Required for cilia biogenesis and both the assembly and movement of intraflagellar transport proteins along the ciliary axoneme. In Caenorhabditis elegans, this protein is BBSome complex member bbs-2.